The following is a 704-amino-acid chain: Ankyrin repeat and LEM domain-containing protein 1 homolog (704 aa).

The disordered stretch occupies residues 1–29 (MPPNGAITTTPRSRMPPTTPSSGKSRPKK). The span at 8–22 (TTTPRSRMPPTTPSS) shows a compositional bias: low complexity. ANK repeat units lie at residues 28–59 (KKET…NVNA) and 63–93 (DGAT…PMSA). Disordered regions lie at residues 247 to 293 (NEDV…SQET), 314 to 358 (NAGL…ANTT), and 381 to 421 (SKSA…TTVD). Residues 276–288 (RKQRTPVNHHKRS) show a composition bias toward basic residues. Low complexity-rich tracts occupy residues 329–346 (EPAI…TPKT) and 384–405 (AKSS…SFSS). The region spanning 425 to 470 (IRKIRRLREGELKSELKKFGISPAGPLDARTRRLYEKKLLIERRKI) is the LEM domain. The region spanning 525–635 (YNAFCYLIMD…AVKLKNLRNK (111 aa)) is the GIY-YIG domain.

Phosphorylated. Phosphorylated during telophase when localized at the midbody.

It is found in the cytoplasm. The protein localises to the nucleus. It localises to the chromosome. The protein resides in the midbody. Its subcellular location is the cytoskeleton. It is found in the spindle. With respect to regulation, inhibited by EDTA. Functionally, endonuclease which, in association with baf-1, plays an essential role during embryogenesis in the DNA repair response following DNA damage probably by ensuring proper chromosome segregation. Also required during postembryonic cell divisions after DNA damage caused by ionizing radiation to ensure normal cell proliferation. Resolves chromatin bridges in late mitosis that result from incomplete DNA replication, defective chromosome condensation or unresolved recombination intermediates. Together with brc-1, contributes to genome integrity by resolving mitotic chromatin bridges that result from incomplete processing of DNA breaks. In parallel to the slx-1/mus-81 pathway, acts in processing early recombination intermediates in meiotic prophase I to prevent illegitimate recombination. Also involved in processing remaining, erroneous recombination intermediates that persist into the second meiotic division. The protein is Ankyrin repeat and LEM domain-containing protein 1 homolog of Caenorhabditis elegans.